Reading from the N-terminus, the 208-residue chain is Protein-L-isoaspartate O-methyltransferase (208 aa).

Ser59 is an active-site residue.

This sequence belongs to the methyltransferase superfamily. L-isoaspartyl/D-aspartyl protein methyltransferase family.

Its subcellular location is the cytoplasm. It carries out the reaction [protein]-L-isoaspartate + S-adenosyl-L-methionine = [protein]-L-isoaspartate alpha-methyl ester + S-adenosyl-L-homocysteine. Its function is as follows. Catalyzes the methyl esterification of L-isoaspartyl residues in peptides and proteins that result from spontaneous decomposition of normal L-aspartyl and L-asparaginyl residues. It plays a role in the repair and/or degradation of damaged proteins. The sequence is that of Protein-L-isoaspartate O-methyltransferase from Escherichia coli (strain K12 / MC4100 / BW2952).